A 381-amino-acid chain; its full sequence is Carbamoyl phosphate synthase small chain (381 aa).

The tract at residues M1 to D192 is CPSase. The L-glutamine site is built by S47, G244, and G246. In terms of domain architecture, Glutamine amidotransferase type-1 spans H196–R381. C272 serves as the catalytic Nucleophile. L-glutamine is bound by residues L273, Q276, N314, G316, and F317. Active-site residues include H356 and E358.

The protein belongs to the CarA family. In terms of assembly, composed of two chains; the small (or glutamine) chain promotes the hydrolysis of glutamine to ammonia, which is used by the large (or ammonia) chain to synthesize carbamoyl phosphate. Tetramer of heterodimers (alpha,beta)4.

The catalysed reaction is hydrogencarbonate + L-glutamine + 2 ATP + H2O = carbamoyl phosphate + L-glutamate + 2 ADP + phosphate + 2 H(+). The enzyme catalyses L-glutamine + H2O = L-glutamate + NH4(+). It functions in the pathway amino-acid biosynthesis; L-arginine biosynthesis; carbamoyl phosphate from bicarbonate: step 1/1. The protein operates within pyrimidine metabolism; UMP biosynthesis via de novo pathway; (S)-dihydroorotate from bicarbonate: step 1/3. Functionally, small subunit of the glutamine-dependent carbamoyl phosphate synthetase (CPSase). CPSase catalyzes the formation of carbamoyl phosphate from the ammonia moiety of glutamine, carbonate, and phosphate donated by ATP, constituting the first step of 2 biosynthetic pathways, one leading to arginine and/or urea and the other to pyrimidine nucleotides. The small subunit (glutamine amidotransferase) binds and cleaves glutamine to supply the large subunit with the substrate ammonia. The protein is Carbamoyl phosphate synthase small chain of Halomonas eurihalina.